The following is a 359-amino-acid chain: Ribosomal RNA small subunit methyltransferase H (359 aa).

Residues 39–41 (AGH), Asp-58, Phe-87, Asp-108, and Gln-115 contribute to the S-adenosyl-L-methionine site. Residues 339 to 359 (IQGSASPGRAKNTARIRTRRG) are disordered. Over residues 350–359 (NTARIRTRRG) the composition is skewed to basic residues.

The protein belongs to the methyltransferase superfamily. RsmH family.

The protein localises to the cytoplasm. The catalysed reaction is cytidine(1402) in 16S rRNA + S-adenosyl-L-methionine = N(4)-methylcytidine(1402) in 16S rRNA + S-adenosyl-L-homocysteine + H(+). Functionally, specifically methylates the N4 position of cytidine in position 1402 (C1402) of 16S rRNA. The sequence is that of Ribosomal RNA small subunit methyltransferase H from Bifidobacterium longum (strain DJO10A).